We begin with the raw amino-acid sequence, 239 residues long: Transcriptional regulatory protein DcuR (239 aa).

The Response regulatory domain maps to 3–121 (NVLIIDDDAM…RFEEALTGWR (119 aa)). Residue Asp-56 is modified to 4-aspartylphosphate. The segment at residues 181-200 (TDELANEVNISRVSCRKYLI) is a DNA-binding region (H-T-H motif).

In terms of processing, phosphorylated and activated by DcuS.

The protein localises to the cytoplasm. In terms of biological role, member of the two-component regulatory system DcuR/DcuS. Involved in the C4-dicarboxylate-stimulated regulation of the genes encoding the anaerobic fumarate respiratory system (frdABCD; nuoAN; dcuB; dcuC; sdhCDAB; etc.). Weakly regulates the aerobic C4-dicarboxylate transporter dctA. This is Transcriptional regulatory protein DcuR (dcuR) from Escherichia coli O157:H7.